Reading from the N-terminus, the 299-residue chain is Protein LacX, chromosomal (299 aa).

The protein is Protein LacX, chromosomal (lacX) of Lactococcus lactis subsp. lactis (Streptococcus lactis).